A 271-amino-acid polypeptide reads, in one-letter code: Type III pantothenate kinase (271 aa).

6-13 lines the ATP pocket; sequence DVRNTHTV. 109-112 provides a ligand contact to substrate; that stretch reads GADR. The active-site Proton acceptor is the Asp-111. Position 131 (Asp-131) interacts with K(+). Residue Ser-134 coordinates ATP. Thr-186 is a substrate binding site.

Belongs to the type III pantothenate kinase family. As to quaternary structure, homodimer. Requires NH4(+) as cofactor. K(+) serves as cofactor.

The protein resides in the cytoplasm. It carries out the reaction (R)-pantothenate + ATP = (R)-4'-phosphopantothenate + ADP + H(+). It functions in the pathway cofactor biosynthesis; coenzyme A biosynthesis; CoA from (R)-pantothenate: step 1/5. In terms of biological role, catalyzes the phosphorylation of pantothenate (Pan), the first step in CoA biosynthesis. The sequence is that of Type III pantothenate kinase from Mycolicibacterium vanbaalenii (strain DSM 7251 / JCM 13017 / BCRC 16820 / KCTC 9966 / NRRL B-24157 / PYR-1) (Mycobacterium vanbaalenii).